A 404-amino-acid chain; its full sequence is MDYSEIMVRHGELSTKGKNRMRFINKLKNNIQDVLAPFPAITVRSDRDRTHVSLNGTDYQPIVEALKLVFGVQALSPVYKLEKSVPLLVTAVQDIMTSLYRDGLTFKIATKRSDHAFELDSRELNSLLGGAVFEVLPNIQAQMKHPDVTLKVEIRDEAAYISYEEIKGAGGLPVGTSGKGMLMLSGGIDSPVAGYLALKRGLDIEVVHFASPPYTSPGALAKAQDLTRRLTRFGGNIQFIEVPFTEIQEEIKNKAPEAYLMTLTRRFMMRITDAIREQRKGLVIVNGESLGQVASQTLESMQAINAVTSTPIIRPVVTMDKLEIIEMAQAIDTFDISIQPFEDCCTIFAPDRPKTNPKLGNAEKYEERFDIDGLVQRAVSGIVVTEITPEIVNDEVENLIDALL.

Residues 60-165 (QPIVEALKLV…DEAAYISYEE (106 aa)) enclose the THUMP domain. Residues 183 to 184 (ML), 208 to 209 (HF), R265, G287, and Q296 contribute to the ATP site.

Belongs to the ThiI family.

It is found in the cytoplasm. The catalysed reaction is [ThiI sulfur-carrier protein]-S-sulfanyl-L-cysteine + a uridine in tRNA + 2 reduced [2Fe-2S]-[ferredoxin] + ATP + H(+) = [ThiI sulfur-carrier protein]-L-cysteine + a 4-thiouridine in tRNA + 2 oxidized [2Fe-2S]-[ferredoxin] + AMP + diphosphate. It carries out the reaction [ThiS sulfur-carrier protein]-C-terminal Gly-Gly-AMP + S-sulfanyl-L-cysteinyl-[cysteine desulfurase] + AH2 = [ThiS sulfur-carrier protein]-C-terminal-Gly-aminoethanethioate + L-cysteinyl-[cysteine desulfurase] + A + AMP + 2 H(+). The protein operates within cofactor biosynthesis; thiamine diphosphate biosynthesis. Catalyzes the ATP-dependent transfer of a sulfur to tRNA to produce 4-thiouridine in position 8 of tRNAs, which functions as a near-UV photosensor. Also catalyzes the transfer of sulfur to the sulfur carrier protein ThiS, forming ThiS-thiocarboxylate. This is a step in the synthesis of thiazole, in the thiamine biosynthesis pathway. The sulfur is donated as persulfide by IscS. The polypeptide is Probable tRNA sulfurtransferase (Streptococcus pyogenes serotype M3 (strain ATCC BAA-595 / MGAS315)).